The following is a 154-amino-acid chain: Calmodulin-like protein 6 (154 aa).

EF-hand domains lie at 1-36 (MDST…LGII), 37-72 (IPED…IMVE), 77-112 (VGEE…LGLK), and 115-150 (KTLE…GRFF). D14, D16, D18, K20, E25, D50, N52, D54, C56, E61, D90, N92, D94, E101, D128, D130, D132, R134, and E139 together coordinate Ca(2+).

Belongs to the calmodulin family.

Functionally, potential calcium sensor. The protein is Calmodulin-like protein 6 (CML6) of Arabidopsis thaliana (Mouse-ear cress).